The sequence spans 224 residues: MDLQKACDRISQEFETDIIMGANLLVQMIQSQRITSNTPVQTVQPVQPVQPVQSVQSVQSVQSVQSVQPVQPVQPVQPVQPVRVPEINPVLFSYLIPLIPFIQMYHIAQKDVVPKNPQVQKQDVSQFTPDGKFKIPINKTKTIKKSTSEKKTSPKKKTTSQQIKRVRLSDEERNILESQYSKNNFPSPEIRDELAKKIGKTPRQVQIWFQNKRCKDRKNLEKNN.

A disordered region spans residues 139 to 162 (KTKTIKKSTSEKKTSPKKKTTSQQ). A DNA-binding region (homeobox) is located at residues 161-220 (QQIKRVRLSDEERNILESQYSKNNFPSPEIRDELAKKIGKTPRQVQIWFQNKRCKDRKNL).

It is found in the host nucleus. The sequence is that of Putative homeobox protein R749 from Acanthamoeba polyphaga mimivirus (APMV).